Here is a 485-residue protein sequence, read N- to C-terminus: Protein LAZ1 (485 aa).

Topologically, residues 1–19 (MDILKSYHLLAAAYSAPAW) are cytoplasmic. A helical transmembrane segment spans residues 20–40 (ASFMAGAFLVLTLSLSLFLVF). Over 41-53 (DHLSTYKNPEEQK) the chain is Lumenal. A helical membrane pass occupies residues 54-74 (FLIGVILMVPCYSIESFASLV). Residues 75–167 (KPSISVDCGI…QVVKFGIVQY (93 aa)) are Cytoplasmic-facing. The helical transmembrane segment at 168–188 (MIIKSLTALTALILEAFGVYC) threads the bilayer. At 189–196 (EGEFKWGC) the chain is on the lumenal side. Residues 197-217 (GYPYLAVVLNFSQSWALYCLV) traverse the membrane as a helical segment. At 218–241 (QFYGATKDELAHIQPLAKFLTFKS) the chain is on the cytoplasmic side. A helical membrane pass occupies residues 242–262 (IVFLTWWQGVAIALLSSLGLF). Residues 263-277 (KSSIAQSLQLKTSVQ) are Lumenal-facing. The chain crosses the membrane as a helical span at residues 278-298 (DFIICIEMGIASVVHLYVFPA). At 299–485 (KPYGLMGDRF…VRGRRWITKD (187 aa)) the chain is on the cytoplasmic side. Residues 384-415 (MEKSITKFNEKLHKISQNIKKHDKEKRRVKDD) adopt a coiled-coil conformation. The segment at 400 to 485 (QNIKKHDKEK…VRGRRWITKD (86 aa)) is disordered. The segment covering 403–416 (KKHDKEKRRVKDDS) has biased composition (basic and acidic residues). Residues 455–469 (GYTSAESGGESSSDQ) are compositionally biased toward polar residues. Basic and acidic residues predominate over residues 476-485 (VRGRRWITKD).

This sequence belongs to the TMEM184 family.

Its subcellular location is the endomembrane system. It localises to the cell membrane. The protein localises to the cytoplasm. It is found in the cytosol. Its function is as follows. Required for programmed cell death (PCD) associated with hypersensitive response (HR). Involved both in the induction of EDS1/PAD4 mediated HR and in accelerated cell death in the acd11 mutant. Not required for HR induction elicited through pathways exclusively dependent on CC-NB-LRR resistance proteins. The sequence is that of Protein LAZ1 from Arabidopsis thaliana (Mouse-ear cress).